The chain runs to 189 residues: Inner membrane-spanning protein YciB (189 aa).

A run of 5 helical transmembrane segments spans residues 4 to 24, 53 to 73, 76 to 96, 121 to 141, and 149 to 169; these read FFEF…DIYI, ITFG…DDVF, WKVT…QFFY, MAWA…AFSL, and FKVF…GLYI.

Belongs to the YciB family.

The protein resides in the cell inner membrane. In terms of biological role, plays a role in cell envelope biogenesis, maintenance of cell envelope integrity and membrane homeostasis. The protein is Inner membrane-spanning protein YciB of Psychromonas ingrahamii (strain DSM 17664 / CCUG 51855 / 37).